The primary structure comprises 649 residues: Protein PSK SIMULATOR 3 (649 aa).

Residue glycine 2 is the site of N-myristoyl glycine attachment. The segment at 18 to 43 is disordered; the sequence is SGSSVADDGREPDFGHSQPNGQTSLI.

Its subcellular location is the nucleus. Functionally, promotes plant growth, especially at the vegetative stage, probably via the regulation of phytosulfokine (PSK) signaling; PSK are peptide phytohormones acting as growth factors. Together with PSI2 and PSI3, required during vegetative growth and reproduction. May also have a function in carbohydrate metabolism. This Arabidopsis thaliana (Mouse-ear cress) protein is Protein PSK SIMULATOR 3.